Reading from the N-terminus, the 457-residue chain is Tubulin beta chain (457 aa).

GTP-binding residues include Gln-11, Glu-69, Ser-138, Gly-142, Thr-143, Gly-144, Asn-204, and Asn-226. Glu-69 is a Mg(2+) binding site. The segment at 431–457 is disordered; the sequence is EGEEEEDAYAEGAVVNGDQSYEDQYAA.

The protein belongs to the tubulin family. As to quaternary structure, dimer of alpha and beta chains. A typical microtubule is a hollow water-filled tube with an outer diameter of 25 nm and an inner diameter of 15 nM. Alpha-beta heterodimers associate head-to-tail to form protofilaments running lengthwise along the microtubule wall with the beta-tubulin subunit facing the microtubule plus end conferring a structural polarity. Microtubules usually have 13 protofilaments but different protofilament numbers can be found in some organisms and specialized cells. Mg(2+) serves as cofactor.

Its subcellular location is the cytoplasm. The protein localises to the cytoskeleton. Functionally, tubulin is the major constituent of microtubules, a cylinder consisting of laterally associated linear protofilaments composed of alpha- and beta-tubulin heterodimers. Microtubules grow by the addition of GTP-tubulin dimers to the microtubule end, where a stabilizing cap forms. Below the cap, tubulin dimers are in GDP-bound state, owing to GTPase activity of alpha-tubulin. The protein is Tubulin beta chain (TUBB1) of Porphyra purpurea (Red seaweed).